A 255-amino-acid polypeptide reads, in one-letter code: Pyridoxine 5'-phosphate synthase (255 aa).

2 residues coordinate 3-amino-2-oxopropyl phosphate: Asn8 and Arg19. The active-site Proton acceptor is His44. Arg46 and His51 together coordinate 1-deoxy-D-xylulose 5-phosphate. The active-site Proton acceptor is the Glu74. Thr111 contacts 1-deoxy-D-xylulose 5-phosphate. His202 acts as the Proton donor in catalysis. 3-amino-2-oxopropyl phosphate is bound by residues Asp203 and 225-226 (GH).

Belongs to the PNP synthase family. In terms of assembly, homooctamer; tetramer of dimers.

It is found in the cytoplasm. The catalysed reaction is 3-amino-2-oxopropyl phosphate + 1-deoxy-D-xylulose 5-phosphate = pyridoxine 5'-phosphate + phosphate + 2 H2O + H(+). It participates in cofactor biosynthesis; pyridoxine 5'-phosphate biosynthesis; pyridoxine 5'-phosphate from D-erythrose 4-phosphate: step 5/5. Its function is as follows. Catalyzes the complicated ring closure reaction between the two acyclic compounds 1-deoxy-D-xylulose-5-phosphate (DXP) and 3-amino-2-oxopropyl phosphate (1-amino-acetone-3-phosphate or AAP) to form pyridoxine 5'-phosphate (PNP) and inorganic phosphate. The polypeptide is Pyridoxine 5'-phosphate synthase (Xanthomonas oryzae pv. oryzae (strain PXO99A)).